We begin with the raw amino-acid sequence, 309 residues long: uncharacterized protein (309 aa).

The interval 272 to 291 (PSLDAPSETVEAFPEPQKNL) is disordered.

This is an uncharacterized protein from Bacillus subtilis (strain 168).